The following is a 272-amino-acid chain: MANYTAADVKKLREITGAGMMDCKKALEEAAGDFDKAIEILRIKGAKDVGKRAERSASEGLIAVSGNTMIEVNAETDFVAKNSEFIEFADKVAAAAAEAKANSREELEAVEVDGQKAVDALQQLSAKIGEKLELKRATTIEGDKVAVYMHHRSADLPPAVGVLVAYEGDDEGAAKAAAMQVAALKAKYLSSDEVPAETVAKEREIAEATAREEGKPEKALPNIIEGRLKGYFKDVCLLDQPSVTESKKSVKQVMDEAGVTLKGFKRFEVGQA.

Residues 76–79 form an involved in Mg(2+) ion dislocation from EF-Tu region; it reads TDFV.

The protein belongs to the EF-Ts family.

The protein localises to the cytoplasm. Functionally, associates with the EF-Tu.GDP complex and induces the exchange of GDP to GTP. It remains bound to the aminoacyl-tRNA.EF-Tu.GTP complex up to the GTP hydrolysis stage on the ribosome. The protein is Elongation factor Ts of Corynebacterium jeikeium (strain K411).